The chain runs to 371 residues: Protein SOMBRERO (371 aa).

The NAC domain maps to 17–166 (VPPGFRFHPT…GWVVCRVFKK (150 aa)). Residues 118–172 (IGLRKTLVFYTGRAPHGQKTEWIMHEYRLDDSENEIQEDGWVVCRVFKKKNHFRG) mediate DNA binding. Disordered stretches follow at residues 176–213 (EQEQDHHHHHQYISTNNDHDHHHHIDSNSNNHSPLILH) and 316–355 (VQNHQAKCFGDLSNNDNNDQADHLGNNNGGSSSSPVNQRF). The segment covering 192 to 201 (NDHDHHHHID) has biased composition (basic and acidic residues). Low complexity-rich tracts occupy residues 202 to 213 (SNSNNHSPLILH) and 340 to 349 (GNNNGGSSSS).

As to expression, accumulates in maturing root cap cells, in both COL and LRC cells.

It localises to the nucleus. Its function is as follows. Transcription regulator. Together with BRN1 and BRN2, regulates cellular maturation of root cap. Represses stem cell-like divisions in the root cap daughter cells, and thus promotes daughter cell fate. Inhibits expression of its positive regulator FEZ in a feedback loop for controlled switches in cell division plane. Promotes the expression of genes involved in secondary cell walls (SCW) biosynthesis. The protein is Protein SOMBRERO (SMB) of Arabidopsis thaliana (Mouse-ear cress).